Here is a 207-residue protein sequence, read N- to C-terminus: Tereporin-Ts1 (207 aa).

A signal peptide spans 1 to 11 (VIFALVLGNAS). Residues 35-54 (SAGTSLASTILSGLAASGYR) form an N-terminal region region. Phosphocholine is bound by residues G111, S129, P131, Y164, and Y165.

The protein belongs to the actinoporin family. Conoidea subfamily. Octamer or nonamer in membranes. Monomer in the soluble state. As to expression, expressed by the venom duct.

It is found in the secreted. The protein resides in the nematocyst. It localises to the target cell membrane. Its function is as follows. Pore-forming protein that forms pores of around 1 nm and causes cardiac stimulation and cytolysis. This is Tereporin-Ts1 from Terebra subulata (Chocolate spotted auger).